Consider the following 264-residue polypeptide: 2',3'-cyclic-nucleotide 2'-phosphodiesterase (264 aa).

Aspartate 8, glutamate 39, asparagine 40, and asparagine 67 together coordinate Fe cation. The Proton donor role is filled by histidine 68. Positions 150, 175, and 177 each coordinate Fe cation.

Belongs to the YmdB-like family. As to quaternary structure, homodimer. Requires Fe(2+) as cofactor. The cofactor is Fe(3+).

Its subcellular location is the cytoplasm. The enzyme catalyses a nucleoside 2',3'-cyclic phosphate + H2O = a nucleoside 3'-phosphate + H(+). Functionally, plays a central, regulatory role in the late adaptive responses and affects the levels of many genes. May act via regulation of cAMP levels. Decreases the expression of motility genes and induces genes involved in biofilm formation, by controlling the expression of SlrR. Required for formation of intercellular nanotubes that bridge neighboring cells to allow molecular exchange. Plays a key role in directing the early stages of colony development. In vitro, has a metal-dependent phosphodiesterase activity against 2',3'-cAMP and 2',3'-cGMP. Also has 3',5'-cyclic-nucleotide phosphodiesterase activity, but cannot use cyclic di-AMP or cyclic di-GMP, and does not have phosphatase activity. This is 2',3'-cyclic-nucleotide 2'-phosphodiesterase (ymdB) from Bacillus subtilis (strain 168).